A 251-amino-acid chain; its full sequence is Triosephosphate isomerase (251 aa).

9-11 serves as a coordination point for substrate; that stretch reads NWK. His-94 functions as the Electrophile in the catalytic mechanism. The active-site Proton acceptor is Glu-166. Residues Gly-172, Ser-211, and 232–233 contribute to the substrate site; that span reads GG.

The protein belongs to the triosephosphate isomerase family. As to quaternary structure, homodimer.

The protein localises to the cytoplasm. The enzyme catalyses D-glyceraldehyde 3-phosphate = dihydroxyacetone phosphate. It functions in the pathway carbohydrate biosynthesis; gluconeogenesis. Its pathway is carbohydrate degradation; glycolysis; D-glyceraldehyde 3-phosphate from glycerone phosphate: step 1/1. Functionally, involved in the gluconeogenesis. Catalyzes stereospecifically the conversion of dihydroxyacetone phosphate (DHAP) to D-glyceraldehyde-3-phosphate (G3P). In Stenotrophomonas maltophilia (strain R551-3), this protein is Triosephosphate isomerase.